Reading from the N-terminus, the 114-residue chain is Transcription initiation factor IIB (114 aa).

A run of 2 repeats spans residues 1 to 17 (VEQK…AQEL) and 28 to 109 (QYVP…EQIE).

It belongs to the TFIIB family.

In terms of biological role, stabilizes TBP binding to an archaeal box-A promoter. Also responsible for recruiting RNA polymerase II to the pre-initiation complex (DNA-TBP-TFIIB). This Haloarcula vallismortis (Halobacterium vallismortis) protein is Transcription initiation factor IIB (tfb).